Here is a 250-residue protein sequence, read N- to C-terminus: tRNA:m(4)X modification enzyme TRM13 (250 aa).

Basic residues predominate over residues Met1 to Pro10. Residues Met1–Gly20 form a disordered region. Positions Ser11–Gly20 are enriched in pro residues. The CHHC U11-48K-type zinc finger occupies Leu62 to Lys89. 4 residues coordinate Zn(2+): Cys65, His71, His81, and Cys85.

It belongs to the methyltransferase TRM13 family.

It is found in the nucleus. It localises to the cytoplasm. The enzyme catalyses cytidine(4) in tRNA(Pro) + S-adenosyl-L-methionine = 2'-O-methylcytidine(4) in tRNA(Pro) + S-adenosyl-L-homocysteine + H(+). It catalyses the reaction cytidine(4) in tRNA(Gly)(GCC) + S-adenosyl-L-methionine = 2'-O-methylcytidine(4) in tRNA(Gly)(GCC) + S-adenosyl-L-homocysteine + H(+). The catalysed reaction is adenosine(4) in tRNA(His) + S-adenosyl-L-methionine = 2'-O-methyladenosine(4) in tRNA(His) + S-adenosyl-L-homocysteine + H(+). Functionally, tRNA methylase that catalyzes 2'-O-methyladenosine (Am) nucleoside formation on tRNA(Gly)(GCC) in vitro. May 2'-O-methylate cytidine(4) in tRNA(Pro) and tRNA(Gly)(GCC), and adenosine(4) in tRNA(His). Involved in salt stress tolerance. This Oryza sativa subsp. japonica (Rice) protein is tRNA:m(4)X modification enzyme TRM13.